Reading from the N-terminus, the 1140-residue chain is MARYTQRPENALKRANEFIEVGKPLRALDTLQEVFRNKRWNYAYSETVIEPLMFKYLYLCVELKKSHIAKEGLFQYRNMFQLVNVNSLENVIRGYLKMAEEHTEAAQAQSSAAVAVLELDDLDNIATPESILMSAVCGEDAQDRSDRTILLPWVKFLWESYCQCLELLRVNTHCEALYHDIARMAFQFCLKYNRKSEFRRLCDKLRKHLEDICKSSNQTTGVSINKVETQQLCLDTRLYLLDSAIQMELWQEAYKAIEDIHGLMALSKKTPVPKTMANYYQKLAMVFSKAGNQLFHAAALLKLFQLTRELKKNLTKDDLQRMAAHVLLATLSIPLPSAHPEFDRFIEADKSPLEKAQKLAVLLGLPQPPTRVSLIREVVRLNVPQLVSEDFRNLYNWLEVDFNPLNLCKRIQSIVDFIENGPENALLTPYIQSLKDVTIMRLIRQISQVYESIKFQRLLQLASFCNIFELEKLLVESVRHNDMQIRIDHQKNSIYFGTDLTESQREYRPDGPALQSMPSEQIRSQLVNMSTVLTRAVSIVYPNRERDQRAKLRNQMVNHYHEIKDREHQRILQRQKIIEDRKEYIEKQNNAREEEEARRQEEESRKAKLAEQKRLEQEQEERERKRHQNEIQAIREKSLKEKVQQISQTAHGKKMLSKLDEEGIKKLDAEQIAKRESEELQREAKELQSKLKSQEKKIDYFERAKRLEEIPLFEKYLAEKQVKDKEFWEATEKTRIENAIAERKDAVAQQERLKRMYPDRDEFLEALKKERASLYVEKLKKFEAALEAERKKRLADRIIRRREERRQAFLREKEEERLRKEEEIRLAQAAEERAAAEARRLEREAEDEKRRAQYEKQRAKEEEAERKIKEDRDRLSRELASERERTEKDRDTWRPRGGDRPSASNGGSSEWRRAAPAASERNDRGGERIERGGERIERGGERLERGGERIERGGDRDRKDNEGADSSWRVRREPDSQRAAAPKDSGAPQSRDDKWRRGGERDRDFRIDGARRDRDDGPRRDRDDGPRRDRDDERGGFRRADGARRTDEPQRETGGNWRDAPRHADRETRRPAERRDRDVRETRGDQRGSAPKEAASGGVGGNWRTAPATREEKPAAKRDQAQEKENKAGDDGEWTSVKRR.

The PCI domain maps to 319-501 (LQRMAAHVLL…NSIYFGTDLT (183 aa)). 2 stretches are compositionally biased toward basic and acidic residues: residues 588-623 (QNNA…EERE) and 829-899 (AAEE…RGGD). Disordered stretches follow at residues 588–630 (QNNA…HQNE) and 829–1140 (AAEE…VKRR). Serine 908 bears the Phosphoserine mark. 4 stretches are compositionally biased toward basic and acidic residues: residues 920-976 (ERND…EPDS), 990-1051 (SRDD…EPQR), 1059-1086 (DAPR…RGDQ), and 1109-1130 (TREE…KAGD).

The protein belongs to the eIF-3 subunit A family. Component of the eukaryotic translation initiation factor 3 (eIF-3) complex. The eIF-3 complex interacts with pix.

It localises to the cytoplasm. In terms of biological role, RNA-binding component of the eukaryotic translation initiation factor 3 (eIF-3) complex, which is involved in protein synthesis of a specialized repertoire of mRNAs and, together with other initiation factors, stimulates binding of mRNA and methionyl-tRNAi to the 40S ribosome. The eIF-3 complex specifically targets and initiates translation of a subset of mRNAs involved in cell proliferation. The chain is Eukaryotic translation initiation factor 3 subunit A from Drosophila melanogaster (Fruit fly).